Here is a 1524-residue protein sequence, read N- to C-terminus: MSGDNSTETGRRRSRGAEASSRKDTLERLKAIRQGGIRSASGGGYDIRLQKPIFDTVDDEEYDALVSRRREEARGFVVEDGEGGDLGYLDEGEEEDWSKPSGPESTDESDDGGRFSGRLKKKKKGKEQTQQPQVKKVNPALKAAATITGEGRLSSMFTSSSFKKVKETDKAQYEGILDEIIAQVTPDESDRKKHTRRKLPGTVPVTIFKNKKLFSVASSMGMKESEPTPSTYEGDSVSMDNELMKEEDMKESEVIPSETMELLGSDIVKEDGSNKIRKTEVKSELGVKEVFTLNATIDMKEKDSALSATAGWKEAMGKVGTENGALLGSSSEGKTEFDLDADGSLRFFILDAYEEAFGASMGTIYLFGKVKMGDTYKSCCVVVKNIQRCVYAIPNDSIFPSHELIMLEQEVKDSRLSPESFRGKLHEMASKLKNEIAQELLQLNVSNFSMAPVKRNYAFERPDVPAGEQYVLKINYSFKDRPLPEDLKGESFSALLGSHTSALEHFILKRKIMGPCWLKISSFSTCSPSEGVSWCKFEVTVQSPKDITILVSEEKVVHPPAVVTAINLKTIVNEKQNISEIVSASVLCFHNAKIDVPMPAPERKRSGILSHFTVVRNPEGTGYPIGWKKEVSDRNSKNGCNVLSIENSERALLNRLFLELNKLDSDILVGHNISGFDLDVLLQRAQACKVQSSMWSKIGRLKRSFMPKLKGNSNYGSGATPGLMSCIAGRLLCDTDLCSRDLLKEVSYSLTDLSKTQLNRDRKEIAPNDIPKMFQSSKTLVELIECGETDAWLSMELMFHLSVLPLTLQLTNISGNLWGKTLQGARAQRIEYYLLHTFHSKKFILPDKISQRMKEIKSSKRRMDYAPEDRNVDELDADLTLENDPSKGSKTKKGPAYAGGLVLEPKRGLYDKYVLLLDFNSLYPSIIQEYNICFTTIPRSEDGVPRLPSSQTPGILPKLMEHLVSIRKSVKLKMKKETGLKYWELDIRQQALKLTANSMYGCLGFSNSRFYAKPLAELITLQGRDILQRTVDLVQNHLNLEVIYGDTDSIMIHSGLDDIEEVKAIKSKVIQEVNKKYRCLKIDCDGIYKRMLLLRKKKYAAVKLQFKDGKPCEDIERKGVDMVRRDWSLLSKEIGDLCLSKILYGGSCEDVVEAIHNELMKIKEEMRNGQVALEKYVITKTLTKPPAAYPDSKSQPHVQVALRMRQRGYKEGFNAKDTVPYIICYEQGNASSASSAGIAERARHPDEVKSEGSRWLVDIDYYLAQQIHPVVSRLCAEIQGTSPERLAECLGLDPSKYRSKSNDATSSDPSTSLLFATSDEERYKSCEPLALTCPSCSTAFNCPSIISSVCASISKKPATPETEESDSTFWLKLHCPKCQQEDSTGIISPAMIANQVKRQIDGFVSMYYKGIMVCEDESCKHTTRSPNFRLLGERERGTVCPNYPNCNGTLLRKYTEADLYKQLSYFCHILDTQCSLEKMDVGVRIQVEKAMTKIRPAVKSAAAITRSSRDRCAYGWMQLTDIVI.

2 disordered regions span residues 1–53 (MSGD…QKPI) and 68–139 (RRRE…KVNP). Basic and acidic residues predominate over residues 20–30 (SSRKDTLERLK). Positions 79–96 (EDGEGGDLGYLDEGEEED) are enriched in acidic residues. Zn(2+) is bound by residues C1333, C1336, C1375, C1378, C1414, C1419, C1440, and C1446. The segment at 1333–1378 (CPSCSTAFNCPSIISSVCASISKKPATPETEESDSTFWLKLHCPKC) adopts a CysA-type zinc-finger fold. Positions 1414–1446 (CEDESCKHTTRSPNFRLLGERERGTVCPNYPNC) match the CysB motif motif.

This sequence belongs to the DNA polymerase type-B family.

It is found in the nucleus. It catalyses the reaction DNA(n) + a 2'-deoxyribonucleoside 5'-triphosphate = DNA(n+1) + diphosphate. Polymerase alpha in a complex with DNA primase is a replicative polymerase. This chain is DNA polymerase alpha catalytic subunit (POLA), found in Arabidopsis thaliana (Mouse-ear cress).